Reading from the N-terminus, the 88-residue chain is Small ribosomal subunit protein bS20 (88 aa).

The interval 1-25 (MANSAQARKRVRQNNTRRQHAASQR) is disordered. Basic residues predominate over residues 7–20 (ARKRVRQNNTRRQH).

It belongs to the bacterial ribosomal protein bS20 family.

In terms of biological role, binds directly to 16S ribosomal RNA. This is Small ribosomal subunit protein bS20 from Psychrobacter sp. (strain PRwf-1).